Consider the following 247-residue polypeptide: Complement C1q subcomponent subunit B (247 aa).

The N-terminal stretch at 1–22 (MKTPRGSVLVLLLLNLLRVSWA) is a signal peptide. Glutamine 23 is modified (pyrrolidone carboxylic acid). A 4-hydroxyproline mark is found at proline 29, proline 32, proline 35, proline 47, and proline 50. Residues 30 to 78 (SIPGIPGIPGKPGSDGKPGTPGTKGEKGLPGLVSHLNENGEKGDPGFPG) form a disordered region. Residues 39–98 (GKPGSDGKPGTPGTKGEKGLPGLVSHLNENGEKGDPGFPGMPGKVGPKGPIGPKGVPGPP) form the Collagen-like domain. Low complexity predominate over residues 40–52 (KPGSDGKPGTPGT). 2 positions are modified to 5-hydroxylysine: lysine 53 and lysine 56. Proline 59 carries the 4-hydroxyproline modification. At lysine 71 the chain carries 5-hydroxylysine. 4-hydroxyproline is present on residues proline 77 and proline 80. 5-hydroxylysine is present on residues lysine 86 and lysine 92. 4-hydroxyproline occurs at positions 95 and 98. Position 104 is a 5-hydroxylysine (lysine 104). The C1q domain occupies 111 to 247 (KATQKIAFSA…GFMLFPDTEA (137 aa)). Cysteine 175 and cysteine 192 are disulfide-bonded. Positions 193, 194, and 200 each coordinate Ca(2+).

Core component of the complement C1 complex, a calcium-dependent complex composed of 1 molecule of the C1Q subcomplex, 2 molecules of C1R and 2 molecules of C1S. The C1Q subcomplex is composed 18 subunits: 3 chains of C1QA, C1QB, and C1QC trimerize to form 6 collagen-like triple helices connected to six globular ligand-recognition modules (C1q domain). In terms of processing, hydroxylated on lysine and proline residues. Hydroxylated lysine residues can be glycosylated. Bovine C1Q contains up to 66.3 hydroxylysine-galactosylglucose residues. Total percentage hydroxylysine residues glycosylated is 92.0%. Contains no hydroxylysine-monosaccharides.

It is found in the secreted. Its subcellular location is the cell surface. With respect to regulation, the C1Q subcomplex is inhibited by sulfated molecules, such as triterpenoid sulfates, heparan sulfate, or chondroitin sulfates. In terms of biological role, core component of the complement C1 complex, a multiprotein complex that initiates the classical pathway of the complement system, a cascade of proteins that leads to phagocytosis and breakdown of pathogens and signaling that strengthens the adaptive immune system. The classical complement pathway is initiated by the C1Q subcomplex of the C1 complex, which specifically binds IgG or IgM immunoglobulins complexed with antigens, forming antigen-antibody complexes on the surface of pathogens: C1QA, together with C1QB and C1QC, specifically recognizes and binds the Fc regions of IgG or IgM via its C1q domain. Immunoglobulin-binding activates the proenzyme C1R, which cleaves C1S, initiating the proteolytic cascade of the complement system. The C1Q subcomplex is activated by a hexamer of IgG complexed with antigens, while it is activated by a pentameric IgM. The C1Q subcomplex also recognizes and binds phosphatidylserine exposed on the surface of cells undergoing programmed cell death, possibly promoting activation of the complement system. The protein is Complement C1q subcomponent subunit B (C1QB) of Bos taurus (Bovine).